Reading from the N-terminus, the 255-residue chain is Arginine-binding extracellular protein ArtP (255 aa).

The first 19 residues, 1–19 (MKKWLLLLVAACITFALTA), serve as a signal peptide directing secretion. Cys20 carries N-palmitoyl cysteine lipidation. The S-diacylglycerol cysteine moiety is linked to residue Cys20.

The protein belongs to the bacterial solute-binding protein 3 family.

The protein localises to the cell membrane. Part of a binding-protein-dependent transport system for arginine. In Bacillus subtilis (strain 168), this protein is Arginine-binding extracellular protein ArtP (artP).